The following is a 517-amino-acid chain: Serine hydroxymethyltransferase 2, mitochondrial (517 aa).

The N-terminal 31 residues, 1-31 (MAMASALRRLSSSSNKPLQRLFNGGHLYSMS), are a transit peptide targeting the mitochondrion. N6-(pyridoxal phosphate)lysine is present on Lys287.

This sequence belongs to the SHMT family. As to quaternary structure, homotetramer. It depends on pyridoxal 5'-phosphate as a cofactor.

It is found in the mitochondrion. It carries out the reaction (6R)-5,10-methylene-5,6,7,8-tetrahydrofolate + glycine + H2O = (6S)-5,6,7,8-tetrahydrofolate + L-serine. It functions in the pathway one-carbon metabolism; tetrahydrofolate interconversion. Its function is as follows. Catalyzes the interconversion of serine and glycine. The sequence is that of Serine hydroxymethyltransferase 2, mitochondrial from Flaveria pringlei.